Consider the following 1370-residue polypeptide: Insulin-like growth factor 1 receptor (1370 aa).

Residues M1–G30 form the signal peptide. Residues C33 and C52 are joined by a disulfide bond. N-linked (GlcNAc...) asparagine glycans are attached at residues N51, N102, and N135. 13 disulfide bridges follow: C150/C178, C182/C205, C192/C211, C215/C224, C219/C230, C231/C239, C235/C248, C251/C260, C264/C276, C282/C303, C307/C321, C324/C328, and C332/C354. A glycan (N-linked (GlcNAc...) asparagine) is linked at N245. N-linked (GlcNAc...) asparagine glycosylation occurs at N314. N418 and N439 each carry an N-linked (GlcNAc...) asparagine glycan. C456 and C489 are oxidised to a cystine. Fibronectin type-III domains lie at E490–S610 and V611–E709. N-linked (GlcNAc...) asparagine glycans are attached at residues N535, N608, N623, N641, N748, N757, N765, N901, and N914. At D742–H936 the chain is on the extracellular side. Positions I835–K928 constitute a Fibronectin type-III 3 domain. A helical membrane pass occupies residues L937 to H960. The Cytoplasmic segment spans residues R961 to C1370. The IRS1- and SHC1-binding signature appears at N978–Y981. Residue Y981 is modified to Phosphotyrosine. The Protein kinase domain occupies I1000–F1275. ATP is bound by residues L1006–V1014 and K1034. The Proton acceptor role is filled by D1136. Y1162, Y1166, and Y1167 each carry phosphotyrosine; by autocatalysis. Glycyl lysine isopeptide (Lys-Gly) (interchain with G-Cter in ubiquitin) cross-links involve residues K1169 and K1172. Residue S1279 is modified to Phosphoserine; by GSK3-beta. A Phosphoserine modification is found at S1283. Positions N1304–C1370 are disordered. Residues M1305–L1321 show a composition bias toward low complexity. The span at P1322–E1331 shows a compositional bias: basic and acidic residues.

The protein belongs to the protein kinase superfamily. Tyr protein kinase family. Insulin receptor subfamily. As to quaternary structure, tetramer of 2 alpha and 2 beta chains linked by disulfide bonds. The alpha chains contribute to the formation of the ligand-binding domain, while the beta chain carries the kinase domain. Interacts with PIK3R1 and with the PTB/PID domains of IRS1 and SHC1 in vitro when autophosphorylated on tyrosine residues. Forms a hybrid receptor with INSR, the hybrid is a tetramer consisting of 1 alpha chain and 1 beta chain of INSR and 1 alpha chain and 1 beta chain of IGF1R. Interacts with ARRB1 and ARRB2. Interacts with GRB10. Interacts with RACK1. Interacts with SOCS1, SOCS2 and SOCS3. Interacts with 14-3-3 proteins. Interacts with NMD2. Interacts with MAP3K5. Interacts with STAT3. Found in a ternary complex with IGF1 and ITGAV:ITGB3 or ITGA6:ITGB4. Interacts (nascent precursor form) with ZFAND2B. In terms of processing, autophosphorylated on tyrosine residues in response to ligand binding. Autophosphorylation occurs in trans, i.e. one subunit of the dimeric receptor phosphorylates tyrosine residues on the other subunit. Autophosphorylation occurs in a sequential manner; Tyr-1166 is predominantly phosphorylated first, followed by phosphorylation of Tyr-1162 and Tyr-1167. While every single phosphorylation increases kinase activity, all three tyrosine residues in the kinase activation loop (Tyr-1162, Tyr-1166 and Tyr-1167) have to be phosphorylated for optimal activity. Can be autophosphorylated at additional tyrosine residues (in vitro). Autophosphorylated is followed by phosphorylation of juxtamembrane tyrosines and C-terminal serines. May also be phosphorylated at Tyr-1162 and Tyr-1167 by mTORC2. Phosphorylation of Tyr-981 is required for IRS1- and SHC1-binding. Phosphorylation of Ser-1279 by GSK-3beta restrains kinase activity and promotes cell surface expression, it requires a priming phosphorylation at Ser-1283. Dephosphorylated by PTPN1. Polyubiquitinated at Lys-1169 and Lys-1172 through both 'Lys-48' and 'Lys-29' linkages, promoting receptor endocytosis and subsequent degradation by the proteasome. Ubiquitination is facilitated by pre-existing phosphorylation. Post-translationally, sumoylated with SUMO1. In terms of processing, controlled by regulated intramembrane proteolysis (RIP). Undergoes metalloprotease-dependent constitutive ectodomain shedding to produce a membrane-anchored 52 kDa C-Terminal fragment which is further processed by presenilin gamma-secretase to yield an intracellular 50 kDa fragment.

The protein localises to the cell membrane. It catalyses the reaction L-tyrosyl-[protein] + ATP = O-phospho-L-tyrosyl-[protein] + ADP + H(+). With respect to regulation, activated by autophosphorylation at Tyr-1162, Tyr-1166 and Tyr-1167 on the kinase activation loop; phosphorylation at all three tyrosine residues is required for optimal kinase activity. Inhibited by MSC1609119A-1, BMS-754807, PQIP, benzimidazole pyridinone, isoquinolinedione, bis-azaindole, 3-cyanoquinoline, 2,4-bis-arylamino-1,3-pyrimidine, pyrrolopyrimidine, pyrrole-5-carboxaldehyde, picropodophyllin (PPP), tyrphostin derivatives. While most inhibitors bind to the ATP binding pocket, MSC1609119A-1 functions as allosteric inhibitor and binds close to the DFG motif and the activation loop. Dephosphorylated by PTPN1. Its function is as follows. Receptor tyrosine kinase which mediates actions of insulin-like growth factor 1 (IGF1). Binds IGF1 with high affinity and IGF2 and insulin (INS) with a lower affinity. The activated IGF1R is involved in cell growth and survival control. IGF1R is crucial for tumor transformation and survival of malignant cell. Ligand binding activates the receptor kinase, leading to receptor autophosphorylation, and tyrosines phosphorylation of multiple substrates, that function as signaling adapter proteins including, the insulin-receptor substrates (IRS1/2), Shc and 14-3-3 proteins. Phosphorylation of IRSs proteins lead to the activation of two main signaling pathways: the PI3K-AKT/PKB pathway and the Ras-MAPK pathway. The result of activating the MAPK pathway is increased cellular proliferation, whereas activating the PI3K pathway inhibits apoptosis and stimulates protein synthesis. Phosphorylated IRS1 can activate the 85 kDa regulatory subunit of PI3K (PIK3R1), leading to activation of several downstream substrates, including protein AKT/PKB. AKT phosphorylation, in turn, enhances protein synthesis through mTOR activation and triggers the antiapoptotic effects of IGFIR through phosphorylation and inactivation of BAD. In parallel to PI3K-driven signaling, recruitment of Grb2/SOS by phosphorylated IRS1 or Shc leads to recruitment of Ras and activation of the ras-MAPK pathway. In addition to these two main signaling pathways IGF1R signals also through the Janus kinase/signal transducer and activator of transcription pathway (JAK/STAT). Phosphorylation of JAK proteins can lead to phosphorylation/activation of signal transducers and activators of transcription (STAT) proteins. In particular activation of STAT3, may be essential for the transforming activity of IGF1R. The JAK/STAT pathway activates gene transcription and may be responsible for the transforming activity. JNK kinases can also be activated by the IGF1R. IGF1 exerts inhibiting activities on JNK activation via phosphorylation and inhibition of MAP3K5/ASK1, which is able to directly associate with the IGF1R. When present in a hybrid receptor with INSR, binds IGF1. This Rattus norvegicus (Rat) protein is Insulin-like growth factor 1 receptor (Igf1r).